A 104-amino-acid chain; its full sequence is Large ribosomal subunit protein uL24 (104 aa).

It belongs to the universal ribosomal protein uL24 family. As to quaternary structure, part of the 50S ribosomal subunit.

One of two assembly initiator proteins, it binds directly to the 5'-end of the 23S rRNA, where it nucleates assembly of the 50S subunit. Its function is as follows. One of the proteins that surrounds the polypeptide exit tunnel on the outside of the subunit. The polypeptide is Large ribosomal subunit protein uL24 (Cronobacter sakazakii (strain ATCC BAA-894) (Enterobacter sakazakii)).